Here is a 98-residue protein sequence, read N- to C-terminus: NADH-ubiquinone oxidoreductase chain 4L (98 aa).

The next 3 membrane-spanning stretches (helical) occupy residues 1–21, 29–49, and 61–81; these read MSMV…GLLM, SLLC…ITIM, and IILL…LVMI.

Belongs to the complex I subunit 4L family. In terms of assembly, core subunit of respiratory chain NADH dehydrogenase (Complex I) which is composed of 45 different subunits.

It is found in the mitochondrion inner membrane. The enzyme catalyses a ubiquinone + NADH + 5 H(+)(in) = a ubiquinol + NAD(+) + 4 H(+)(out). Core subunit of the mitochondrial membrane respiratory chain NADH dehydrogenase (Complex I) which catalyzes electron transfer from NADH through the respiratory chain, using ubiquinone as an electron acceptor. Part of the enzyme membrane arm which is embedded in the lipid bilayer and involved in proton translocation. The chain is NADH-ubiquinone oxidoreductase chain 4L (MT-ND4L) from Procyon lotor (Raccoon).